The chain runs to 364 residues: MANKTILFNKHLESNAKMVDFHGWDMPLNYGSQIEEHHAVRQDAGMFDVSHMTVVDVIGTDACAFLRKLLANDVARLKVPGKALYSGMLDENAGIIDDLITYYLTDTFYRVVVNSATREKDLAWIAKQSQGFDITVTERPELAMIAVQGPNAKAKAAAVFSADQNAAIEGMKPFFGKQAGSLFIATTGYTGEAGYEIIVPEDEAQALWQALLDQGVKPCGLGARDTLRLEAGMNLYGLDMDETINPLAANMGWTIAWEPTDRDFIGRKALEALRDAGTDKLVGLVMEEKGVLRHDMPVFFTDAAGVEHQGVITSGTFSPTLGYSIAMARVPNQIGDTAEVEMRKKRVAVRVVAPNFVRNGKQAF.

It belongs to the GcvT family. In terms of assembly, the glycine cleavage system is composed of four proteins: P, T, L and H.

It carries out the reaction N(6)-[(R)-S(8)-aminomethyldihydrolipoyl]-L-lysyl-[protein] + (6S)-5,6,7,8-tetrahydrofolate = N(6)-[(R)-dihydrolipoyl]-L-lysyl-[protein] + (6R)-5,10-methylene-5,6,7,8-tetrahydrofolate + NH4(+). Functionally, the glycine cleavage system catalyzes the degradation of glycine. This chain is Aminomethyltransferase, found in Shewanella putrefaciens (strain CN-32 / ATCC BAA-453).